Here is a 280-residue protein sequence, read N- to C-terminus: Putative pyruvate, phosphate dikinase regulatory protein (280 aa).

Position 152–159 (152–159 (GVSRTSKS)) interacts with ADP.

It belongs to the pyruvate, phosphate/water dikinase regulatory protein family. PDRP subfamily.

It carries out the reaction N(tele)-phospho-L-histidyl/L-threonyl-[pyruvate, phosphate dikinase] + ADP = N(tele)-phospho-L-histidyl/O-phospho-L-threonyl-[pyruvate, phosphate dikinase] + AMP + H(+). The enzyme catalyses N(tele)-phospho-L-histidyl/O-phospho-L-threonyl-[pyruvate, phosphate dikinase] + phosphate + H(+) = N(tele)-phospho-L-histidyl/L-threonyl-[pyruvate, phosphate dikinase] + diphosphate. Its function is as follows. Bifunctional serine/threonine kinase and phosphorylase involved in the regulation of the pyruvate, phosphate dikinase (PPDK) by catalyzing its phosphorylation/dephosphorylation. The protein is Putative pyruvate, phosphate dikinase regulatory protein of Anaplasma phagocytophilum (strain HZ).